The following is a 160-amino-acid chain: MNDDKTERPVKTANQRGAARLAAVQALYQMDVGGTGVLEIVAEYEAHRLGQELDGATYLKADAGWFRSIVSGVVRDQTRLDPLIAAALQDDWALSRLDSTVRAILRAGVFEITDRKDVPVAVIVTEYVEIAQAFFDDDEPKLVNAVLDRIAKQVRGETKK.

It belongs to the NusB family.

In terms of biological role, involved in transcription antitermination. Required for transcription of ribosomal RNA (rRNA) genes. Binds specifically to the boxA antiterminator sequence of the ribosomal RNA (rrn) operons. This is Transcription antitermination protein NusB from Rhizobium leguminosarum bv. trifolii (strain WSM2304).